The sequence spans 394 residues: Formate-dependent phosphoribosylglycinamide formyltransferase (394 aa).

N(1)-(5-phospho-beta-D-ribosyl)glycinamide contacts are provided by residues 21-22 (EL) and E81. ATP is bound by residues R113, K154, 159-164 (SSGKGQ), 194-197 (EEFI), and E202. Residues 118-307 (RLAAEELGLP…QFELHVRAIL (190 aa)) enclose the ATP-grasp domain. Mg(2+)-binding residues include E266 and E278. N(1)-(5-phospho-beta-D-ribosyl)glycinamide-binding positions include D285, K355, and 362–363 (RR).

It belongs to the PurK/PurT family. Homodimer.

It carries out the reaction N(1)-(5-phospho-beta-D-ribosyl)glycinamide + formate + ATP = N(2)-formyl-N(1)-(5-phospho-beta-D-ribosyl)glycinamide + ADP + phosphate + H(+). Its pathway is purine metabolism; IMP biosynthesis via de novo pathway; N(2)-formyl-N(1)-(5-phospho-D-ribosyl)glycinamide from N(1)-(5-phospho-D-ribosyl)glycinamide (formate route): step 1/1. In terms of biological role, involved in the de novo purine biosynthesis. Catalyzes the transfer of formate to 5-phospho-ribosyl-glycinamide (GAR), producing 5-phospho-ribosyl-N-formylglycinamide (FGAR). Formate is provided by PurU via hydrolysis of 10-formyl-tetrahydrofolate. This chain is Formate-dependent phosphoribosylglycinamide formyltransferase, found in Pelobacter propionicus (strain DSM 2379 / NBRC 103807 / OttBd1).